A 720-amino-acid chain; its full sequence is Proline-rich receptor-like protein kinase PERK12 (720 aa).

A disordered region spans residues 1–240; sequence MSDLGESPSS…GNGDGGGGGG (240 aa). Residues 1–246 lie on the Extracellular side of the membrane; the sequence is MSDLGESPSS…GGGGGYQGKT (246 aa). A compositionally biased stretch (pro residues) spans 10–25; that stretch reads SSPPAPPADTAPPPET. A compositionally biased stretch (low complexity) spans 26 to 35; sequence PSENSALPPV. Composition is skewed to pro residues over residues 52 to 84 and 92 to 116; these read LSEP…PSDS and PSPP…PAPP. Asn117 carries N-linked (GlcNAc...) asparagine glycosylation. Pro residues-rich tracts occupy residues 123-138 and 147-207; these read NPPP…PSSP and PESP…PPKT. The helical transmembrane segment at 247-267 threads the bilayer; the sequence is MVGMAVAGFAIMALIGVVFLV. Over 268–720 the chain is Cytoplasmic; the sequence is RRKKKRNIDS…ETRPFNNRRF (453 aa). The disordered stretch occupies residues 300 to 349; it reads QDPGKGYSSGPNGSMYNNSQQQQSSMGNSYGTAGGGYPHHQMQSSGTPDS. The segment covering 311 to 330 has biased composition (low complexity); that stretch reads NGSMYNNSQQQQSSMGNSYG. The Protein kinase domain maps to 371 to 624; the sequence is FARKNILGEG…EVFRMIETAA (254 aa). ATP contacts are provided by residues 377-385 and Lys399; that span reads LGEGGFGCV. Position 444 is a phosphotyrosine (Tyr444). Asp495 functions as the Proton acceptor in the catalytic mechanism. Ser528 bears the Phosphoserine mark. Phosphothreonine is present on residues Thr529 and Thr534. Phosphotyrosine is present on Tyr542. Positions 698–720 are disordered; it reads SAKSSSDFSGNESETRPFNNRRF.

This sequence belongs to the protein kinase superfamily. Ser/Thr protein kinase family. Mostly expressed in apical parts, including flower buds, and particularly in anthers. Also present in root hairs.

It localises to the cell membrane. The enzyme catalyses L-seryl-[protein] + ATP = O-phospho-L-seryl-[protein] + ADP + H(+). It catalyses the reaction L-threonyl-[protein] + ATP = O-phospho-L-threonyl-[protein] + ADP + H(+). Functionally, regulates the auxin-related MAX (More Axillary Growth) pathway during the shoot branching. In Arabidopsis thaliana (Mouse-ear cress), this protein is Proline-rich receptor-like protein kinase PERK12 (PERK12).